The chain runs to 394 residues: MLWVIGINHKVEVDIRQKFSLTKTKLQEKLISLKKLADEVIILSTCNRTEIYFFSEEYVDIEKIFTELDWDRRYMPLFYIYKDKDCIKHLFEVVCGFDSLLIGEEQIVAQVKEAKDIAKQVGGKNPVLERLFEVALKCSKEFRTKARLNEHPITIASVVGKVLKESNIRKIAIIGLGNIGFLFCNYFKNSDVDKVFLIGRKNERIDQFVKLYPGKFEYSDKKDAISEAQCLICSTSAPHAVVHKDDIPDGKNLLIFDLAVPRDVDVEVYKLPNVKVIDIDQVHKMDATSREIRISKMQENYNIIEKYIDEFIEWLGFRQYRNLIIEVKRHAEQLCKAQVKYLKNVDSREREEVERLLIRMANLYIDRAIEVLREAHKEGSGEICSNLIKRIFLK.

Substrate contacts are provided by residues 45–48 (TCNR), S99, 104–106 (EEQ), and Q110. The Nucleophile role is filled by C46. 175–180 (GLGNIG) serves as a coordination point for NADP(+).

Belongs to the glutamyl-tRNA reductase family. In terms of assembly, homodimer.

It carries out the reaction (S)-4-amino-5-oxopentanoate + tRNA(Glu) + NADP(+) = L-glutamyl-tRNA(Glu) + NADPH + H(+). It functions in the pathway porphyrin-containing compound metabolism; protoporphyrin-IX biosynthesis; 5-aminolevulinate from L-glutamyl-tRNA(Glu): step 1/2. Functionally, catalyzes the NADPH-dependent reduction of glutamyl-tRNA(Glu) to glutamate 1-semialdehyde (GSA). The protein is Glutamyl-tRNA reductase of Caldicellulosiruptor saccharolyticus (strain ATCC 43494 / DSM 8903 / Tp8T 6331).